The sequence spans 635 residues: Voltage-gated potassium channel KCNC4 (635 aa).

The tract at residues 1–24 (MISSVCVSSYRGRKSGNKPPSKTC) is disordered. Positions 1-28 (MISSVCVSSYRGRKSGNKPPSKTCLKEE) are inactivation gate. Over 1–226 (MISSVCVSSY…EDPYSSRAAR (226 aa)) the chain is Cytoplasmic. 4 positions are modified to phosphoserine: S8, S9, S15, and S21. Positions 116, 122, 143, and 144 each coordinate Zn(2+). Residues 160–180 (IFESPDGGGSGAGPSDEAGDD) form a disordered region. The helical transmembrane segment at 227-247 (VVAFASLFFILVSITTFCLET) threads the bilayer. N-linked (GlcNAc...) asparagine glycosylation is found at N256 and N265. A helical transmembrane segment spans residues 278–298 (EPILTYIEGVCVLWFTLEFLV). Residues 299-312 (RIVCCPDTLDFVKN) are Cytoplasmic-facing. A helical transmembrane segment spans residues 313-333 (LLNIIDFVAILPFYLEVGLSG). The chain crosses the membrane as a helical; Voltage-sensor span at residues 345–364 (FLRVVRFVRILRIFKLTRHF). The Cytoplasmic portion of the chain corresponds to 365–380 (VGLRVLGHTLRASTNE). A helical membrane pass occupies residues 381-401 (FLLLIIFLALGVLIFATMIYY). T436, L437, G438, and Y439 together coordinate K(+). The short motif at 436 to 441 (TLGYGD) is the Selectivity filter element. A helical membrane pass occupies residues 452–472 (VGALCALAGVLTIAMPVPVIV). The Cytoplasmic portion of the chain corresponds to 473 to 635 (NNFGMYYSLA…PTAGTLFLPH (163 aa)). The disordered stretch occupies residues 490–580 (KKRKKHVPRP…RRALRRSTTR (91 aa)). Residues 527–542 (AREEGMIERKRADSKQ) show a composition bias toward basic and acidic residues.

This sequence belongs to the potassium channel family. C (Shaw) (TC 1.A.1.2) subfamily. Kv3.4/KCNC4 sub-subfamily. Homotetramer. Heterotetramer of potassium channel proteins. In terms of processing, phosphorylation of serine residues in the inactivation gate inhibits rapid channel closure.

The protein resides in the membrane. It carries out the reaction K(+)(in) = K(+)(out). Voltage-gated potassium channel that opens in response to the voltage difference across the membrane, forming a potassium-selective channel through which potassium ions pass in accordance with their electrochemical gradient. The channel displays rapid activation and inactivation kinetics. The sequence is that of Voltage-gated potassium channel KCNC4 from Homo sapiens (Human).